The primary structure comprises 198 residues: Armadillo repeat-containing protein 7 (198 aa).

ARM repeat units lie at residues glutamine 57–glycine 99 and leucine 100–proline 140. Serine 169 bears the Phosphoserine mark.

In terms of assembly, component of the minor spliceosome. Within this complex, interacts with RBM48.

Functionally, as a component of the minor spliceosome, involved in the splicing of U12-type introns in pre-mRNAs. In Mus musculus (Mouse), this protein is Armadillo repeat-containing protein 7 (Armc7).